The following is a 1135-amino-acid chain: Receptor-type guanylate cyclase gcy-4 (1135 aa).

Positions Met1–Ser20 are cleaved as a signal peptide. At Gln21 to Arg483 the chain is on the extracellular side. Asn37, Asn193, Asn209, Asn251, Asn349, Asn375, Asn431, Asn436, and Asn447 each carry an N-linked (GlcNAc...) asparagine glycan. A helical membrane pass occupies residues Leu484 to Leu504. Topologically, residues Thr505–Ser1135 are cytoplasmic. The disordered stretch occupies residues Lys535–Phe560. One can recognise a Protein kinase domain in the interval Asn545–Ser837. Positions Ser546–Phe560 are enriched in low complexity. The Guanylate cyclase domain maps to Thr895 to Glu1025.

This sequence belongs to the adenylyl cyclase class-4/guanylyl cyclase family. As to expression, expressed bilaterally in ASE neurons.

It is found in the cell membrane. It carries out the reaction GTP = 3',5'-cyclic GMP + diphosphate. In terms of biological role, guanylate cyclase involved in the production of the second messenger cGMP. Regulates chemotaxis responses toward salt ions in ASE sensory neurons. In Caenorhabditis briggsae, this protein is Receptor-type guanylate cyclase gcy-4.